Here is a 347-residue protein sequence, read N- to C-terminus: S-adenosylmethionine:tRNA ribosyltransferase-isomerase (347 aa).

This sequence belongs to the QueA family. Monomer.

The protein resides in the cytoplasm. It catalyses the reaction 7-aminomethyl-7-carbaguanosine(34) in tRNA + S-adenosyl-L-methionine = epoxyqueuosine(34) in tRNA + adenine + L-methionine + 2 H(+). It functions in the pathway tRNA modification; tRNA-queuosine biosynthesis. Functionally, transfers and isomerizes the ribose moiety from AdoMet to the 7-aminomethyl group of 7-deazaguanine (preQ1-tRNA) to give epoxyqueuosine (oQ-tRNA). The sequence is that of S-adenosylmethionine:tRNA ribosyltransferase-isomerase from Pseudomonas paraeruginosa (strain DSM 24068 / PA7) (Pseudomonas aeruginosa (strain PA7)).